An 80-amino-acid chain; its full sequence is Conotoxin VnMSGL-0123 (80 aa).

A signal peptide spans 1–20 (MSGLGIMVLTLLLLVSMATS). Positions 21-44 (HQDGGGKQATQRDAINVRRRRSIT) are excised as a propeptide. Disulfide bonds link Cys-53–Cys-65, Cys-57–Cys-74, and Cys-64–Cys-78. Phenylalanine amide is present on Phe-79.

This sequence belongs to the conotoxin O3 superfamily. As to expression, expressed by the venom duct.

It localises to the secreted. This is Conotoxin VnMSGL-0123 from Conus ventricosus (Mediterranean cone).